Reading from the N-terminus, the 576-residue chain is uncharacterized protein (576 aa).

Belongs to the chlamydial CPn_0065/CT_288/TC_0561 family.

This is an uncharacterized protein from Chlamydia pneumoniae (Chlamydophila pneumoniae).